Consider the following 390-residue polypeptide: Nuclear receptor subfamily 2 group F member 6 (390 aa).

Gly residues predominate over residues 1 to 15 (MAMVTGGWGGPGGDT). Positions 1 to 50 (MAMVTGGWGGPGGDTNGVDKAGGSYPRATEDDSASPPGATSDAEPGDEER) are disordered. A phosphoserine mark is found at Ser-35 and Ser-41. A DNA-binding region (nuclear receptor) is located at residues 54–129 (QVDCVVCGDK…VGMRKEAVQP (76 aa)). 2 NR C4-type zinc fingers span residues 57-77 (CVVC…CEGC) and 93-117 (CRSN…LKKC). The 224-residue stretch at 157 to 380 (PVSELIAQLL…TLIRDMLLSG (224 aa)) folds into the NR LBD domain. The tract at residues 314–390 (LQEKAQVALT…STFNWPYGSG (77 aa)) is important for dimerization.

The protein belongs to the nuclear hormone receptor family. NR2 subfamily. In terms of assembly, binds DNA as dimer; homodimer and heterodimer with NR2F2 and probably NR2F1. Interacts with THRB.

It is found in the nucleus. Functionally, transcription factor predominantly involved in transcriptional repression. Binds to promoter/enhancer response elements that contain the imperfect 5'-AGGTCA-3' direct or inverted repeats with various spacings which are also recognized by other nuclear hormone receptors. Involved in modulation of hormonal responses. Represses transcriptional activity of the lutropin-choriogonadotropic hormone receptor/LHCGR gene, the renin/REN gene and the oxytocin-neurophysin/OXT gene. Represses the triiodothyronine-dependent and -independent transcriptional activity of the thyroid hormone receptor gene in a cell type-specific manner. The corepressing function towards thyroid hormone receptor beta/THRB involves at least in part the inhibition of THRB binding to triiodothyronine response elements (TREs) by NR2F6. Inhibits NFATC transcription factor DNA binding and subsequently its transcriptional activity. Acts as transcriptional repressor of IL-17 expression in Th-17 differentiated CD4(+) T cells and may be involved in induction and/or maintenance of peripheral immunological tolerance and autoimmunity. Involved in development of forebrain circadian clock; is required early in the development of the locus coeruleus (LC). This chain is Nuclear receptor subfamily 2 group F member 6 (Nr2f6), found in Rattus norvegicus (Rat).